Reading from the N-terminus, the 813-residue chain is G-type lectin S-receptor-like serine/threonine-protein kinase LECRK1 (813 aa).

The signal sequence occupies residues 1-19 (MVALLLFPMLLQLLSPTCA). At 20 to 466 (QTQKNITLGS…NRKHWVLGSS (447 aa)) the chain is on the extracellular side. In terms of domain architecture, Bulb-type lectin spans 22-149 (QKNITLGSTL…DGTTKWQTFD (128 aa)). 6 N-linked (GlcNAc...) asparagine glycosylation sites follow: Asn-24, Asn-57, Asn-164, Asn-168, Asn-219, and Asn-242. Residues 293–346 (PQNICHAIVSDVGSGVCGFNSYCTFDGTRNQIASCQCPPWYKFFDEQKKYKGCK) enclose the EGF-like; atypical domain. Cystine bridges form between Cys-297–Cys-315, Cys-309–Cys-327, Cys-329–Cys-345, Cys-391–Cys-413, and Cys-395–Cys-401. The region spanning 354–433 (CDLEEATALA…NMADYVQRTV (80 aa)) is the PAN domain. N-linked (GlcNAc...) asparagine glycosylation is found at Asn-407 and Asn-441. A helical transmembrane segment spans residues 467–487 (LILGTSILVNFALISIFLFGT). Over 488-813 (YCRITTKKNI…DPCSFISSLP (326 aa)) the chain is Cytoplasmic. One can recognise a Protein kinase domain in the interval 523–797 (AGFHEILGAG…KVTQMLDGAV (275 aa)). ATP is bound by residues 529–537 (LGAGASGVV) and Lys-553. Catalysis depends on Asp-647, which acts as the Proton acceptor.

Belongs to the protein kinase superfamily. Ser/Thr protein kinase family. As to quaternary structure, interacts (via kinase domain) with ADF4. As to expression, expressed in plumules, radicles and panicles.

The protein resides in the membrane. It carries out the reaction L-seryl-[protein] + ATP = O-phospho-L-seryl-[protein] + ADP + H(+). The enzyme catalyses L-threonyl-[protein] + ATP = O-phospho-L-threonyl-[protein] + ADP + H(+). In terms of biological role, involved in innate immunity. Required for the expression of defense-related genes PR1A, LOX2 and CHS1 upon biotic stresses. Required for basal resistance to the fungal blast (M.grisea), bacterial blight (O.oryzae pv. oryzae, Xoo) and the herbivorous insect brown planthopper (N.lugens, BPH). May be involved in several defense signaling pathways. Involved in the promotion of seed germination. Required for the expression of alpha-amylase genes during seed germination. Involved in resistance against the brown planthopper (BPH). Member of the BPH3 (BPH resistance locus 3) cluster which contains LECRK1, LECRK2 and LECRK3. The protein is G-type lectin S-receptor-like serine/threonine-protein kinase LECRK1 of Oryza sativa subsp. indica (Rice).